A 116-amino-acid chain; its full sequence is Endoribonuclease EndoA (116 aa).

Belongs to the PemK/MazF family. In terms of assembly, homodimer. Forms a complex with antitoxin EndoAI in which the toxin activity is inhibited. One dimer binds a ssRNA substrate, forms a heterohexamer composed of alternating toxin and antitoxin homodimers which inhibits the endoribonuclease activity. Antitoxin prevents RNA binding to the endoribonuclease.

Functionally, toxic component of a type II toxin-antitoxin (TA) system. Specific for 5'-UACAU-3' sequences, cleaving after the first U. Yields cleavage products with 3' phosphate and 5' hydroxyl groups. Cannot digest substrate with a UUdUACAUAA cleavage site. Overexpression is toxic for cell growth (shown in E.coli), probably by inhibiting protein synthesis through the cleavage of single-stranded RNA. The toxicity is reversed by the antitoxin EndoAI. Toxin activity cannot be inhibited by MazE from E.coli. The EndoA-EndoAI complex does not seem to bind its own promoter. The protein is Endoribonuclease EndoA of Bacillus subtilis (strain 168).